The sequence spans 261 residues: Receptor expression-enhancing protein 4 (261 aa).

2 consecutive transmembrane segments (helical) span residues 1–21 (MVSW…YPAY) and 35–55 (YVRW…ETFT). The segment at 177–261 (ELHRRPIGYP…KKPAQSEPEN (85 aa)) is disordered. Residues 191–202 (ADSDSMDERWSD) are compositionally biased toward basic and acidic residues.

It belongs to the DP1 family. In terms of assembly, interacts with microtubules. In terms of tissue distribution, during gastrulation, expressed on the dorsal side of the embryo and then in the neural plate and neural tube. At tailbud stages, expressed in the somites. Expressed in the neural tube later in development.

It localises to the endoplasmic reticulum membrane. In terms of biological role, microtubule-binding protein required to ensure proper cell division and nuclear envelope reassembly by sequestering the endoplasmic reticulum away from chromosomes during mitosis. Probably acts by clearing the endoplasmic reticulum membrane from metaphase chromosomes. May play a role in the maintenance of both the nervous system and the musculature. This Xenopus tropicalis (Western clawed frog) protein is Receptor expression-enhancing protein 4 (reep4).